The following is a 240-amino-acid chain: Uridylate kinase (240 aa).

12 to 15 (KLSG) is an ATP binding site. The tract at residues 20–25 (GEQGNG) is involved in allosteric activation by GTP. Position 54 (G54) interacts with UMP. ATP is bound by residues G55 and R59. UMP contacts are provided by residues D74 and 135–142 (TGNPYFST). 3 residues coordinate ATP: N163, Y169, and D172.

It belongs to the UMP kinase family. In terms of assembly, homohexamer.

It localises to the cytoplasm. It carries out the reaction UMP + ATP = UDP + ADP. The protein operates within pyrimidine metabolism; CTP biosynthesis via de novo pathway; UDP from UMP (UMPK route): step 1/1. Allosterically activated by GTP. Inhibited by UTP. Its function is as follows. Catalyzes the reversible phosphorylation of UMP to UDP. The sequence is that of Uridylate kinase from Bacillus velezensis (strain DSM 23117 / BGSC 10A6 / LMG 26770 / FZB42) (Bacillus amyloliquefaciens subsp. plantarum).